We begin with the raw amino-acid sequence, 465 residues long: Cysteine--tRNA ligase (465 aa).

Cys-30 contributes to the Zn(2+) binding site. A 'HIGH' region motif is present at residues Pro-32–Asn-42. Zn(2+) contacts are provided by Cys-213, His-238, and Glu-242. The short motif at Lys-271–Ser-275 is the 'KMSKS' region element. Residue Lys-274 coordinates ATP.

This sequence belongs to the class-I aminoacyl-tRNA synthetase family. Monomer. Zn(2+) serves as cofactor.

Its subcellular location is the cytoplasm. The enzyme catalyses tRNA(Cys) + L-cysteine + ATP = L-cysteinyl-tRNA(Cys) + AMP + diphosphate. This is Cysteine--tRNA ligase from Ruegeria pomeroyi (strain ATCC 700808 / DSM 15171 / DSS-3) (Silicibacter pomeroyi).